The sequence spans 292 residues: 4-hydroxy-tetrahydrodipicolinate synthase (292 aa).

A pyruvate-binding site is contributed by Thr45. Catalysis depends on Tyr133, which acts as the Proton donor/acceptor. The active-site Schiff-base intermediate with substrate is the Lys161. Residue Ile203 coordinates pyruvate.

It belongs to the DapA family. As to quaternary structure, homodimer.

The protein resides in the cytoplasm. The enzyme catalyses L-aspartate 4-semialdehyde + pyruvate = (2S,4S)-4-hydroxy-2,3,4,5-tetrahydrodipicolinate + H2O + H(+). The protein operates within amino-acid biosynthesis; L-lysine biosynthesis via DAP pathway; (S)-tetrahydrodipicolinate from L-aspartate: step 3/4. In terms of biological role, catalyzes the condensation of (S)-aspartate-beta-semialdehyde [(S)-ASA] and pyruvate to 4-hydroxy-tetrahydrodipicolinate (HTPA). The polypeptide is 4-hydroxy-tetrahydrodipicolinate synthase (Pseudomonas savastanoi pv. phaseolicola (strain 1448A / Race 6) (Pseudomonas syringae pv. phaseolicola (strain 1448A / Race 6))).